The following is a 428-amino-acid chain: Glutamate-1-semialdehyde 2,1-aminomutase (428 aa).

N6-(pyridoxal phosphate)lysine is present on lysine 267.

Belongs to the class-III pyridoxal-phosphate-dependent aminotransferase family. HemL subfamily. Homodimer. The cofactor is pyridoxal 5'-phosphate.

It is found in the cytoplasm. It catalyses the reaction (S)-4-amino-5-oxopentanoate = 5-aminolevulinate. It participates in porphyrin-containing compound metabolism; protoporphyrin-IX biosynthesis; 5-aminolevulinate from L-glutamyl-tRNA(Glu): step 2/2. Its pathway is porphyrin-containing compound metabolism; chlorophyll biosynthesis. The protein is Glutamate-1-semialdehyde 2,1-aminomutase of Prochlorococcus marinus (strain MIT 9303).